Here is a 247-residue protein sequence, read N- to C-terminus: MIIMLSPAKNMKNIEVFDRDLSLPCFIDNTKEIVENIKTFAIEDFKNKMKINEKLAVLNKNRFESIKFDRLGNPAILTYDGIQYKNIEAENFTRKDEEFANSCIRIISGLYGVVKPYDSIYEYRLEMQTKLRVGEFKNLYEYWGNRIYKELIKEKTAIVNLSSNEYSKSIEKFIKDSDTYITCTFKVNKNGILKVESTQAKKARGMMTKYIVKNRIRDIEELKKFNLEGYKYKENLSNNSEYIFVKE.

It belongs to the UPF0246 family.

This Clostridioides difficile (strain 630) (Peptoclostridium difficile) protein is UPF0246 protein CD630_18230.